A 406-amino-acid chain; its full sequence is 12S rRNA N(4)-cytidine methyltransferase METTL15 (406 aa).

Residues 1–22 (MLRYPYFYRTYNRLFSHFVDSG) constitute a mitochondrion transit peptide. S-adenosyl-L-methionine is bound by residues 100-102 (GGH), aspartate 119, phenylalanine 146, aspartate 169, and glutamine 176. Serine 358 is subject to Phosphoserine.

It belongs to the methyltransferase superfamily. RsmH family.

Its subcellular location is the mitochondrion matrix. It catalyses the reaction cytidine(839) in 12S rRNA + S-adenosyl-L-methionine = N(4)-methylcytidine(839) in 12S rRNA + S-adenosyl-L-homocysteine + H(+). N4-methylcytidine (m4C) methyltransferase responsible for the methylation of position C839 in mitochondrial 12S rRNA. Involved in the stabilization of 12S rRNA folding, therefore facilitating the assembly of the mitochondrial small ribosomal subunits. The protein is 12S rRNA N(4)-cytidine methyltransferase METTL15 of Mus musculus (Mouse).